The chain runs to 365 residues: 2-aminoethylphosphonate--pyruvate transaminase (365 aa).

Lys-194 carries the post-translational modification N6-(pyridoxal phosphate)lysine.

The protein belongs to the class-V pyridoxal-phosphate-dependent aminotransferase family. PhnW subfamily. In terms of assembly, homodimer. Requires pyridoxal 5'-phosphate as cofactor.

It catalyses the reaction (2-aminoethyl)phosphonate + pyruvate = phosphonoacetaldehyde + L-alanine. Its function is as follows. Involved in phosphonate degradation. This Bacillus mycoides (strain KBAB4) (Bacillus weihenstephanensis) protein is 2-aminoethylphosphonate--pyruvate transaminase.